Consider the following 567-residue polypeptide: Amino-acid acetyltransferase, mitochondrial (567 aa).

Positions 392–558 (KDSPQTNPLH…ARLKEYAKHI (167 aa)) constitute an N-acetyltransferase domain.

Belongs to the acetyltransferase family.

The protein localises to the mitochondrion. The catalysed reaction is L-glutamate + acetyl-CoA = N-acetyl-L-glutamate + CoA + H(+). Its pathway is amino-acid biosynthesis; L-arginine biosynthesis; N(2)-acetyl-L-ornithine from L-glutamate: step 1/4. N-acetylglutamate synthase involved in arginine biosynthesis. The sequence is that of Amino-acid acetyltransferase, mitochondrial (ARG2) from Vanderwaltozyma polyspora (strain ATCC 22028 / DSM 70294 / BCRC 21397 / CBS 2163 / NBRC 10782 / NRRL Y-8283 / UCD 57-17) (Kluyveromyces polysporus).